The chain runs to 407 residues: Serine/threonine transporter SstT (407 aa).

The next 9 membrane-spanning stretches (helical) occupy residues 12-32 (GNLI…GISS), 42-62 (LGIL…FILI), 81-101 (IIIL…LANF), 141-161 (ALSS…GIAL), 179-199 (VLKI…GLVA), 218-238 (ILLV…IVFF), 245-267 (FPLI…SSAA), 288-308 (ISIP…IAIL), and 330-350 (IIAT…LLLI).

Belongs to the dicarboxylate/amino acid:cation symporter (DAACS) (TC 2.A.23) family.

The protein localises to the cell inner membrane. The catalysed reaction is L-serine(in) + Na(+)(in) = L-serine(out) + Na(+)(out). It carries out the reaction L-threonine(in) + Na(+)(in) = L-threonine(out) + Na(+)(out). In terms of biological role, involved in the import of serine and threonine into the cell, with the concomitant import of sodium (symport system). This is Serine/threonine transporter SstT from Campylobacter jejuni subsp. jejuni serotype O:2 (strain ATCC 700819 / NCTC 11168).